The chain runs to 103 residues: Small ribosomal subunit protein uS10 (103 aa).

This sequence belongs to the universal ribosomal protein uS10 family. In terms of assembly, part of the 30S ribosomal subunit.

In terms of biological role, involved in the binding of tRNA to the ribosomes. This Polynucleobacter necessarius subsp. necessarius (strain STIR1) protein is Small ribosomal subunit protein uS10.